The primary structure comprises 393 residues: Chalcone synthase DIII (393 aa).

C164 is a catalytic residue.

The protein belongs to the thiolase-like superfamily. Chalcone/stilbene synthases family.

It catalyses the reaction (E)-4-coumaroyl-CoA + 3 malonyl-CoA + 3 H(+) = 2',4,4',6'-tetrahydroxychalcone + 3 CO2 + 4 CoA. Its pathway is secondary metabolite biosynthesis; flavonoid biosynthesis. Its function is as follows. The primary product of this enzyme is 4,2',4',6'-tetrahydroxychalcone (also termed naringenin-chalcone or chalcone) which can under specific conditions spontaneously isomerize into naringenin. The chain is Chalcone synthase DIII (CHS-DIII) from Ipomoea batatas (Sweet potato).